A 492-amino-acid chain; its full sequence is N-succinylglutamate 5-semialdehyde dehydrogenase (492 aa).

Residue 220–225 participates in NAD(+) binding; it reads GSANTG. Residues E243 and C277 contribute to the active site.

The protein belongs to the aldehyde dehydrogenase family. AstD subfamily.

It carries out the reaction N-succinyl-L-glutamate 5-semialdehyde + NAD(+) + H2O = N-succinyl-L-glutamate + NADH + 2 H(+). Its pathway is amino-acid degradation; L-arginine degradation via AST pathway; L-glutamate and succinate from L-arginine: step 4/5. Its function is as follows. Catalyzes the NAD-dependent reduction of succinylglutamate semialdehyde into succinylglutamate. The sequence is that of N-succinylglutamate 5-semialdehyde dehydrogenase from Escherichia coli O127:H6 (strain E2348/69 / EPEC).